Consider the following 302-residue polypeptide: Protoheme IX farnesyltransferase (302 aa).

The next 9 membrane-spanning stretches (helical) occupy residues 27-47, 53-73, 100-120, 121-141, 149-169, 175-195, 215-235, 237-257, and 273-293; these read VVAL…PGMV, LFGL…NHVI, LVFA…AVNV, LTAV…TVFL, IVWG…AVTG, PLLL…ALAI, VAFT…VSLV, FIIH…GIGF, and AMPT…LLLV.

This sequence belongs to the UbiA prenyltransferase family. Protoheme IX farnesyltransferase subfamily.

The protein localises to the cell inner membrane. It catalyses the reaction heme b + (2E,6E)-farnesyl diphosphate + H2O = Fe(II)-heme o + diphosphate. The protein operates within porphyrin-containing compound metabolism; heme O biosynthesis; heme O from protoheme: step 1/1. In terms of biological role, converts heme B (protoheme IX) to heme O by substitution of the vinyl group on carbon 2 of heme B porphyrin ring with a hydroxyethyl farnesyl side group. This chain is Protoheme IX farnesyltransferase, found in Thioalkalivibrio sulfidiphilus (strain HL-EbGR7).